Consider the following 912-residue polypeptide: Effector protein hopAE1 (912 aa).

The segment covering 1–13 (MMPSQITRSSHSS) has biased composition (polar residues). The segment at 1 to 32 (MMPSQITRSSHSSLPEVAPASGDATGVSEQTP) is disordered.

This sequence belongs to the HopW family.

The protein resides in the secreted. The sequence is that of Effector protein hopAE1 (hopAE1) from Pseudomonas savastanoi pv. phaseolicola (strain 1448A / Race 6) (Pseudomonas syringae pv. phaseolicola (strain 1448A / Race 6)).